The following is a 771-amino-acid chain: Probable cation-transporting ATPase G (771 aa).

The region spanning 19 to 86 (GRMRVQATGF…AIIDAETVPA (68 aa)) is the HMA domain. A helical membrane pass occupies residues 72–92 (AAILSAIIDAETVPAAAVPAY). The segment at 122–143 (DVAAQPSGETSDACCDGEDNED) is disordered. A run of 5 helical transmembrane segments spans residues 163-183 (VLLTASLVAAWAYPLWPVVLG), 209-229 (VGVGTLMTIAALGAVALGELG), 330-350 (VFAGSINGLGVLQVGVTATAA), 387-407 (MIAAALIAGTGSVLGNPLVWI), and 411-431 (LVVLVAAAPCALAIAVPVTVV). The 4-aspartylphosphate intermediate role is filled by D462. The Mg(2+) site is built by D651 and D655. 2 helical membrane-spanning segments follow: residues 657-677 (PALAAADLGIAMGAMGTDVAI) and 716-736 (IITVLMPLALFGILGLAAVVL).

The protein belongs to the cation transport ATPase (P-type) (TC 3.A.3) family. Type IB subfamily.

It localises to the cell membrane. The catalysed reaction is ATP + H2O = ADP + phosphate + H(+). This is Probable cation-transporting ATPase G (ctpG) from Mycobacterium bovis (strain ATCC BAA-935 / AF2122/97).